Consider the following 406-residue polypeptide: Protein IWS1 homolog 2 (406 aa).

2 disordered regions span residues 1-28 (MQEL…TGRR) and 41-89 (DEVE…SEEV). The segment covering 10–24 (EWVKELEGENEESKF) has biased composition (basic and acidic residues). The span at 41–56 (DEVEEDLDDFTEPADD) shows a compositional bias: acidic residues. A compositionally biased stretch (basic and acidic residues) spans 69-78 (KKDESGLEKT). The region spanning 201-284 (NLLKNWLEPL…NKWGRIIYNK (84 aa)) is the TFIIS N-terminal domain.

The protein belongs to the IWS1 family.

It is found in the nucleus. Its function is as follows. Transcription factor involved in RNA polymerase II (RNAPII) transcription regulation. Involved in transcription elongation. May function at post-recruitment and elongation steps of transcription. The sequence is that of Protein IWS1 homolog 2 from Arabidopsis thaliana (Mouse-ear cress).